Consider the following 355-residue polypeptide: Probable dual-specificity RNA methyltransferase RlmN (355 aa).

Glu-89 acts as the Proton acceptor in catalysis. The Radical SAM core domain maps to 95–322 (YENRKTVCLS…KRLGVPTSIR (228 aa)). Cys-102 and Cys-333 are disulfide-bonded. Cys-109, Cys-113, and Cys-116 together coordinate [4Fe-4S] cluster. Residues 159-160 (GE), Ser-191, 214-216 (SLH), and Asn-290 each bind S-adenosyl-L-methionine. Cys-333 functions as the S-methylcysteine intermediate in the catalytic mechanism.

This sequence belongs to the radical SAM superfamily. RlmN family. Requires [4Fe-4S] cluster as cofactor.

The protein localises to the cytoplasm. It catalyses the reaction adenosine(2503) in 23S rRNA + 2 reduced [2Fe-2S]-[ferredoxin] + 2 S-adenosyl-L-methionine = 2-methyladenosine(2503) in 23S rRNA + 5'-deoxyadenosine + L-methionine + 2 oxidized [2Fe-2S]-[ferredoxin] + S-adenosyl-L-homocysteine. The catalysed reaction is adenosine(37) in tRNA + 2 reduced [2Fe-2S]-[ferredoxin] + 2 S-adenosyl-L-methionine = 2-methyladenosine(37) in tRNA + 5'-deoxyadenosine + L-methionine + 2 oxidized [2Fe-2S]-[ferredoxin] + S-adenosyl-L-homocysteine. Specifically methylates position 2 of adenine 2503 in 23S rRNA and position 2 of adenine 37 in tRNAs. The chain is Probable dual-specificity RNA methyltransferase RlmN from Thermus thermophilus (strain ATCC BAA-163 / DSM 7039 / HB27).